Here is a 358-residue protein sequence, read N- to C-terminus: Trace amine-associated receptor 7h (358 aa).

Residues 1–47 (MATDDESFPWDQDSILSRDLLSALSPQLCYENLNRSCVRSPYSPGPR) lie on the Extracellular side of the membrane. The N-linked (GlcNAc...) asparagine glycan is linked to asparagine 34. 2 disulfide bridges follow: cysteine 37-cysteine 201 and cysteine 120-cysteine 205. The chain crosses the membrane as a helical span at residues 48-68 (LILYAVFGFGAVLAVCGNLLV). The Cytoplasmic segment spans residues 69–83 (MTSILHFRQLHSPAN). A helical transmembrane segment spans residues 84–104 (FLVASLACADLLVGLTVMPFS). Over 105–125 (MVRSVEGCWYFGDSYCKLHTS) the chain is Extracellular. Residues 126 to 143 (FDMSFCCSSLLHLCFISV) traverse the membrane as a helical segment. Residues 144-166 (DRYIAVSDPLIYPIRFTASVSGK) are Cytoplasmic-facing. Residues 167 to 187 (CITFSWFLSIIYGFSLIYTGA) traverse the membrane as a helical segment. Residues 188–217 (SEAGLKDLVSALSCVGGCQIPMNQSCVLIN) lie on the Extracellular side of the membrane. Asparagine 210 is a glycosylation site (N-linked (GlcNAc...) asparagine). The helical transmembrane segment at 218 to 238 (FLLFLVPTLVMMTVYSKIFLI) threads the bilayer. Residues 239–274 (AKQQAQNMEKMSKQTTRASDSYKDRVAKRERKAAKT) lie on the Cytoplasmic side of the membrane. A helical transmembrane segment spans residues 275–295 (LGIAVAAFLLSWLPYLIDSII). The Extracellular segment spans residues 296–309 (DAFLGFITPSYVYE). Residues 310–333 (ILVWIVYYNSAMNPLIYAFFYPWF) form a helical membrane-spanning segment. Over 334–358 (RNAIKLIVTGKILKQNSSTTNLFSE) the chain is Cytoplasmic.

The protein belongs to the G-protein coupled receptor 1 family.

The protein resides in the cell membrane. Functionally, olfactory receptor specific for N,N-dimethylalkylamines trace amines. Trace amine compounds are enriched in animal body fluids and act on trace amine-associated receptors (TAARs) to elicit both intraspecific and interspecific innate behaviors. Ligand-binding causes a conformation change that triggers signaling via G(s)-class of G alpha proteins (GNAL or GNAS). This is Trace amine-associated receptor 7h from Rattus norvegicus (Rat).